The following is a 129-amino-acid chain: Prefoldin subunit alpha (129 aa).

It belongs to the prefoldin alpha subunit family. Heterohexamer of two alpha and four beta subunits.

It is found in the cytoplasm. Functionally, molecular chaperone capable of stabilizing a range of proteins. Seems to fulfill an ATP-independent, HSP70-like function in archaeal de novo protein folding. The sequence is that of Prefoldin subunit alpha from Thermofilum pendens (strain DSM 2475 / Hrk 5).